The following is a 31-amino-acid chain: Cyclotide mech-6 (31 aa).

Positions Gly1–Asn31 form a cross-link, cyclopeptide (Gly-Asn). 3 disulfide bridges follow: Cys5/Cys21, Cys9/Cys23, and Cys14/Cys28.

This is a cyclic peptide. In terms of processing, contains 3 disulfide bonds.

Functionally, probably participates in a plant defense mechanism (Potential). Binds to and induces leakage in phospholipd membranes, particularly ones containing 1-palmitoyl-2-oleophosphatidylethanolamine (POPE). This chain is Cyclotide mech-6, found in Melicytus chathamicus (Chatham Island mahoe).